A 389-amino-acid polypeptide reads, in one-letter code: Probable serine/threonine-protein kinase PBL11 (389 aa).

A lipid anchor (N-myristoyl glycine) is attached at G2. C4 carries S-palmitoyl cysteine lipidation. The region spanning F68–L353 is the Protein kinase domain. Residues V74–V82 and K106 contribute to the ATP site. The residue at position 151 (Y151) is a Phosphotyrosine. Residue D203 is the Proton acceptor of the active site. 2 positions are modified to phosphoserine: S207 and S237. T238 and T243 each carry phosphothreonine. Y251 carries the post-translational modification Phosphotyrosine.

Belongs to the protein kinase superfamily. Ser/Thr protein kinase family. Roots, leaves and stems.

It localises to the cell membrane. It catalyses the reaction L-seryl-[protein] + ATP = O-phospho-L-seryl-[protein] + ADP + H(+). It carries out the reaction L-threonyl-[protein] + ATP = O-phospho-L-threonyl-[protein] + ADP + H(+). May play a role in the regulation of plant growth and development. May be involved in plant defense signaling. The polypeptide is Probable serine/threonine-protein kinase PBL11 (Arabidopsis thaliana (Mouse-ear cress)).